The primary structure comprises 497 residues: UPF0371 protein cu0538 (497 aa).

This sequence belongs to the UPF0371 family.

The protein is UPF0371 protein cu0538 of Corynebacterium urealyticum (strain ATCC 43042 / DSM 7109).